The primary structure comprises 158 residues: S-ribosylhomocysteine lyase (158 aa).

The Fe cation site is built by His55, His59, and Cys127.

Belongs to the LuxS family. As to quaternary structure, homodimer. Fe cation serves as cofactor.

The enzyme catalyses S-(5-deoxy-D-ribos-5-yl)-L-homocysteine = (S)-4,5-dihydroxypentane-2,3-dione + L-homocysteine. In terms of biological role, involved in the synthesis of autoinducer 2 (AI-2) which is secreted by bacteria and is used to communicate both the cell density and the metabolic potential of the environment. The regulation of gene expression in response to changes in cell density is called quorum sensing. Catalyzes the transformation of S-ribosylhomocysteine (RHC) to homocysteine (HC) and 4,5-dihydroxy-2,3-pentadione (DPD). The chain is S-ribosylhomocysteine lyase from Geobacillus thermodenitrificans (strain NG80-2).